The sequence spans 170 residues: 6,7-dimethyl-8-ribityllumazine synthase 2 (170 aa).

5-amino-6-(D-ribitylamino)uracil-binding positions include W25, 59–61 (AFE), and 83–85 (LVV). R91 (proton donor) is an active-site residue. S116 contributes to the 5-amino-6-(D-ribitylamino)uracil binding site. A (2S)-2-hydroxy-3-oxobutyl phosphate-binding site is contributed by H130.

The protein belongs to the DMRL synthase family. In terms of assembly, forms an icosahedral capsid composed of 60 subunits, arranged as a dodecamer of pentamers.

It carries out the reaction (2S)-2-hydroxy-3-oxobutyl phosphate + 5-amino-6-(D-ribitylamino)uracil = 6,7-dimethyl-8-(1-D-ribityl)lumazine + phosphate + 2 H2O + H(+). The protein operates within cofactor biosynthesis; riboflavin biosynthesis; riboflavin from 2-hydroxy-3-oxobutyl phosphate and 5-amino-6-(D-ribitylamino)uracil: step 1/2. Functionally, catalyzes the formation of 6,7-dimethyl-8-ribityllumazine by condensation of 5-amino-6-(D-ribitylamino)uracil with 3,4-dihydroxy-2-butanone 4-phosphate. This is the penultimate step in the biosynthesis of riboflavin. The sequence is that of 6,7-dimethyl-8-ribityllumazine synthase 2 from Pseudomonas syringae pv. tomato (strain ATCC BAA-871 / DC3000).